The chain runs to 180 residues: Alpha-S2-casein-like A (180 aa).

An N-terminal signal peptide occupies residues 1–15; the sequence is MRFFVFTCLLAVALA. A phosphoserine mark is found at S23 and S25. A disordered region spans residues 46 to 66; the sequence is PTNQETPSVSSSEESVEVQTE.

This sequence belongs to the alpha-casein family. As to expression, mammary gland specific. Secreted in milk.

It localises to the secreted. Its function is as follows. Important role in the capacity of milk to transport calcium phosphate. In Oryctolagus cuniculus (Rabbit), this protein is Alpha-S2-casein-like A (CSN1S2A).